Consider the following 231-residue polypeptide: Ribonuclease HII (231 aa).

The 192-residue stretch at 23-214 folds into the RNase H type-2 domain; it reads GPVAGVDEAG…VAKAHREWAL (192 aa). A divalent metal cation is bound by residues D29, E30, and D123.

This sequence belongs to the RNase HII family. Requires Mn(2+) as cofactor. Mg(2+) is required as a cofactor.

Its subcellular location is the cytoplasm. It carries out the reaction Endonucleolytic cleavage to 5'-phosphomonoester.. Endonuclease that specifically degrades the RNA of RNA-DNA hybrids. The sequence is that of Ribonuclease HII from Corynebacterium efficiens (strain DSM 44549 / YS-314 / AJ 12310 / JCM 11189 / NBRC 100395).